We begin with the raw amino-acid sequence, 456 residues long: ACT domain-containing protein ACR5 (456 aa).

4 consecutive ACT domains span residues 39-115 (VIKV…FSPS), 130-207 (VVEL…SSGR), 271-347 (IVMI…VSEG), and 349-432 (KLEL…PSPQ).

Expressed in stems and siliques.

Functionally, may bind amino acids. This is ACT domain-containing protein ACR5 from Arabidopsis thaliana (Mouse-ear cress).